Reading from the N-terminus, the 260-residue chain is 3'-5' ssDNA/RNA exonuclease TatD (260 aa).

A divalent metal cation is bound by residues Glu-91, His-127, and His-152.

It belongs to the metallo-dependent hydrolases superfamily. TatD-type hydrolase family. TatD subfamily. In terms of assembly, monomer. It depends on Mg(2+) as a cofactor.

The protein resides in the cytoplasm. Functionally, 3'-5' exonuclease that prefers single-stranded DNA and RNA. May play a role in the H(2)O(2)-induced DNA damage repair. The protein is 3'-5' ssDNA/RNA exonuclease TatD of Salmonella typhimurium (strain LT2 / SGSC1412 / ATCC 700720).